Reading from the N-terminus, the 411-residue chain is Z-DNA-binding protein 1 (411 aa).

2 Z-binding domains span residues 8–70 (LSTG…SIGG) and 84–148 (SSAQ…HSRQ). Residues Lys-17 and Lys-43 each participate in a glycyl lysine isopeptide (Lys-Gly) (interchain with G-Cter in ubiquitin) cross-link. Residues 60 to 86 (SPEPATWSIGGAASGDGAPAIPENSSA) are disordered. 2 consecutive short sequence motifs (RIP homotypic interaction motif (RHIM)) follow at residues 188–205 (NSNA…REKA) and 237–261 (YIYM…LVGD). Disordered stretches follow at residues 263–303 (GKHP…EGDT) and 332–411 (KGEV…LSKQ). 3 stretches are compositionally biased toward polar residues: residues 268-292 (YSFS…NMQT), 350-371 (GTSS…SMLP), and 400-411 (IESSQDTGLSKQ).

As to quaternary structure, homodimer. Interacts (via RIP homotypic interaction motif) with RIPK3; leading to RIPK3 activation and necroptosis; interaction is enhanced by CASP6. Interacts (via RIP homotypic interaction motif) with RIPK1. Component of the AIM2 PANoptosome complex, a multiprotein complex that drives inflammatory cell death (PANoptosis). In terms of assembly, (Microbial infection) Interacts (via RIP homotypic interaction motif) with murid herpesvirus protein RIR1 (via RIP homotypic interaction motif); leading to inhibition of ZBP1-dependent necroptosis. (Microbial infection) Interacts with vaccinia virus E3 protein; leading to inhibit ZBP1-dependent necroptosis. Post-translationally, ubiquitinated; polyubiquitinated following influenza A virus (IAV) infection. Phosphorylated. In terms of tissue distribution, expressed in lung, spleen and liver. Lower levels were seen in heart, kidney and testis. Expression is greatly up-regulated in tumor stromal cells and activated macrophages.

Its subcellular location is the cytoplasm. It localises to the nucleus. Its activity is regulated as follows. ZBP1-dependent necroptosis is normally inhibited by RIPK1: RIPK1 inhibits the ZBP1-induced activation of RIPK3 via FADD-mediated recruitment of CASP8, which cleaves RIPK1 and limits TNF-induced necroptosis. In terms of biological role, key innate sensor that recognizes and binds Z-RNA structures, which are produced by a number of viruses, such as herpesvirus, orthomyxovirus or flavivirus, and triggers different forms of cell death. ZBP1 acts as an essential mediator of pyroptosis, necroptosis and apoptosis (PANoptosis), an integral part of host defense against pathogens, by activating RIPK3, caspase-8 (CASP8), and the NLRP3 inflammasome. Key activator of necroptosis, a programmed cell death process in response to death-inducing TNF-alpha family members, via its ability to bind Z-RNA: once activated upon Z-RNA-binding, ZBP1 interacts and stimulates RIPK3 kinase, which phosphorylates and activates MLKL, triggering execution of programmed necrosis. In addition to TNF-induced necroptosis, necroptosis can also take place in the nucleus in response to orthomyxoviruses infection: ZBP1 recognizes and binds Z-RNA structures that are produced in infected nuclei by orthomyxoviruses, such as the influenza A virus (IAV), leading to ZBP1 activation, RIPK3 stimulation and subsequent MLKL phosphorylation, triggering disruption of the nuclear envelope and leakage of cellular DNA into the cytosol. ZBP1-dependent cell death in response to IAV infection promotes interleukin-1 alpha (IL1A) induction in an NLRP3-inflammasome-independent manner: IL1A expression is required for the optimal interleukin-1 beta (IL1B) production, and together, these cytokines promote infiltration of inflammatory neutrophils to the lung, leading to the formation of neutrophil extracellular traps. In addition to its direct role in driving necroptosis via its ability to sense Z-RNAs, also involved in PANoptosis triggered in response to bacterial infection: component of the AIM2 PANoptosome complex, a multiprotein complex that triggers PANoptosis. Also acts as the apical sensor of fungal infection responsible for activating PANoptosis. Involved in CASP8-mediated cell death via its interaction with RIPK1 but independently of its ability to sense Z-RNAs. In some cell types, also able to restrict viral replication by promoting cell death-independent responses. In response to flavivirus infection in neurons, promotes a cell death-independent pathway that restricts viral replication: together with RIPK3, promotes a death-independent transcriptional program that modifies the cellular metabolism via up-regulation expression of the enzyme ACOD1/IRG1 and production of the metabolite itaconate. Itaconate inhibits the activity of succinate dehydrogenase, generating a metabolic state in neurons that suppresses replication of viral genomes. The chain is Z-DNA-binding protein 1 from Mus musculus (Mouse).